The chain runs to 183 residues: Peptide deformylase (183 aa).

Cys-110 and His-153 together coordinate Fe cation. Residue Glu-154 is part of the active site. His-157 lines the Fe cation pocket.

It belongs to the polypeptide deformylase family. Fe(2+) is required as a cofactor.

It carries out the reaction N-terminal N-formyl-L-methionyl-[peptide] + H2O = N-terminal L-methionyl-[peptide] + formate. Its function is as follows. Removes the formyl group from the N-terminal Met of newly synthesized proteins. Requires at least a dipeptide for an efficient rate of reaction. N-terminal L-methionine is a prerequisite for activity but the enzyme has broad specificity at other positions. This Listeria welshimeri serovar 6b (strain ATCC 35897 / DSM 20650 / CCUG 15529 / CIP 8149 / NCTC 11857 / SLCC 5334 / V8) protein is Peptide deformylase.